The sequence spans 98 residues: NADH-ubiquinone oxidoreductase chain 4L (98 aa).

A run of 3 helical transmembrane segments spans residues 1 to 21, 29 to 49, and 61 to 81; these read MSLTYMNMFMAFTISLLGLLL, SLLCLEGMMLSLFVMMTMIIL, and IILLVFAACEAALGLSLLVMV.

It belongs to the complex I subunit 4L family. As to quaternary structure, core subunit of respiratory chain NADH dehydrogenase (Complex I) which is composed of 45 different subunits.

Its subcellular location is the mitochondrion inner membrane. It catalyses the reaction a ubiquinone + NADH + 5 H(+)(in) = a ubiquinol + NAD(+) + 4 H(+)(out). Functionally, core subunit of the mitochondrial membrane respiratory chain NADH dehydrogenase (Complex I) which catalyzes electron transfer from NADH through the respiratory chain, using ubiquinone as an electron acceptor. Part of the enzyme membrane arm which is embedded in the lipid bilayer and involved in proton translocation. This is NADH-ubiquinone oxidoreductase chain 4L (MT-ND4L) from Platyrrhinus brachycephalus (Short-headed broad-nosed bat).